Here is a 156-residue protein sequence, read N- to C-terminus: MRMANRIGAGRKSALQLSHLRTRLTSSAAAVATAPTLDPAPVPAPAAAPREWLVLFPDMPNVLDRRLEIRPRHSPNFVRLHKEQWVTWAGPIFEKHTFPGNPRRPFKGSVMVVNDVSKEQIWERLKSDPYIQERIWDLDNARVIPFVTNMRRTPKK.

The first 39 residues, 1-39, serve as a signal peptide directing secretion; it reads MRMANRIGAGRKSALQLSHLRTRLTSSAAAVATAPTLDP.

The protein belongs to the YciI family.

Its pathway is secondary metabolite biosynthesis. Functionally, part of the gene cluster that mediates the biosynthesis of aspercryptins, linear lipopeptides built from six amino acids including 2 highly unusual and nonproteogenic amino acids, 2-amino-octanoic acid (2aoa) and 2-amino-dodecanol (2adol). The core structure of aspercryptins is as follows: Ser/Ala-Thr-Ile/Val-2aoa-Aasn-2adol. The first step of aspercryptin biosynthesis is the generation of the fatty acid precursors, octanoic and dodecanoic acids, by the FAS subunits atnF and atnM. The fatty acid precursors are likely transformed into the corresponding alpha-amino fatty acids in three steps. First, they are hydroxylated by the cytochrome P450 monooxygenase atnE, then oxidized to the corresponding alpha-keto acids by the NAD(P)-dependent oxidoreductase atnD, and finally converted to the alpha-amino fatty acids by the PLP-dependent aminotransferases atnH or atnJ. the alpha-amino fatty acids, 2-amino-octanoic and 2-amino-dodecanoic acids, are recognized, activated, and covalently tethered to the NRPS atnA by its fourth and sixth adenylation domains. The second module of atnA is the Thr module and contains an epimerase (E) domain responsible for the epimerization of Thr to D-allo-Thr. Additionally, despite atnA having only one epimerase domain, the first amino acid of aspercryptin A1 is D-Ser, suggesting that serine is either loaded directly as D-Ser on the first module or that the epimerase domain in the threonine module epimerizes both L-Ser and L-Thr. After condensation of the hexapeptide of aspercryptin, the C-terminal reductase (TE) domain might be involved in the reductive release and production of the aldehyde hexapeptide. Further reduction would generate aspercryptins. The variety of aspercryptins produced reflects the flexibility of the atnA NRPS, allowing incorporation of alanine instead of serine, valine for isoleucine, and a C10 fatty amino alcohol instead of the C12 version. AtnB seems to be involved in the selectivity for Ile versus Val by the third module. Moreover, type B, C and D aspercryptins have an additional N-terminal cichorine, acetyl and propionyl group respectively. The chain is Aspercryptin biosynthesis cluster protein B from Emericella nidulans (strain FGSC A4 / ATCC 38163 / CBS 112.46 / NRRL 194 / M139) (Aspergillus nidulans).